The primary structure comprises 153 residues: Large ribosomal subunit protein uL30 (153 aa).

This sequence belongs to the universal ribosomal protein uL30 family. Part of the 50S ribosomal subunit.

In Methanosarcina mazei (strain ATCC BAA-159 / DSM 3647 / Goe1 / Go1 / JCM 11833 / OCM 88) (Methanosarcina frisia), this protein is Large ribosomal subunit protein uL30.